We begin with the raw amino-acid sequence, 70 residues long: Translation initiation factor IF-1 (70 aa).

Residues Met1–His70 enclose the S1-like domain.

This sequence belongs to the IF-1 family. In terms of assembly, component of the 30S ribosomal translation pre-initiation complex which assembles on the 30S ribosome in the order IF-2 and IF-3, IF-1 and N-formylmethionyl-tRNA(fMet); mRNA recruitment can occur at any time during PIC assembly.

It is found in the cytoplasm. Its function is as follows. One of the essential components for the initiation of protein synthesis. Stabilizes the binding of IF-2 and IF-3 on the 30S subunit to which N-formylmethionyl-tRNA(fMet) subsequently binds. Helps modulate mRNA selection, yielding the 30S pre-initiation complex (PIC). Upon addition of the 50S ribosomal subunit IF-1, IF-2 and IF-3 are released leaving the mature 70S translation initiation complex. In Mycoplasmoides gallisepticum (strain R(low / passage 15 / clone 2)) (Mycoplasma gallisepticum), this protein is Translation initiation factor IF-1.